A 160-amino-acid chain; its full sequence is Ribosome maturation factor RimP (160 aa).

This sequence belongs to the RimP family.

The protein localises to the cytoplasm. Required for maturation of 30S ribosomal subunits. The chain is Ribosome maturation factor RimP from Geobacter sp. (strain M21).